We begin with the raw amino-acid sequence, 400 residues long: Phosphoglycerate kinase (400 aa).

Substrate-binding positions include 22–24 (DFN), R38, 61–64 (HLGR), R119, and R152. Residues K205, G296, E327, and 353–356 (GGDT) each bind ATP.

Belongs to the phosphoglycerate kinase family. In terms of assembly, monomer.

The protein localises to the cytoplasm. It catalyses the reaction (2R)-3-phosphoglycerate + ATP = (2R)-3-phospho-glyceroyl phosphate + ADP. The protein operates within carbohydrate degradation; glycolysis; pyruvate from D-glyceraldehyde 3-phosphate: step 2/5. This is Phosphoglycerate kinase from Campylobacter jejuni subsp. jejuni serotype O:23/36 (strain 81-176).